The sequence spans 760 residues: Prolyl endopeptidase FAP (760 aa).

Over 1-4 (MKTW) the chain is Cytoplasmic. The helical; Signal-anchor for type II membrane protein transmembrane segment at 5-25 (LKIVFGVATSAVLALLVMCIV) threads the bilayer. Residues 26–760 (LRPSRVHNSE…FLKQCFSLSD (735 aa)) are Extracellular-facing. N-linked (GlcNAc...) asparagine glycans are attached at residues Asn-49, Asn-92, and Asn-99. Substrate is bound by residues Glu-203 and Glu-204. 2 N-linked (GlcNAc...) asparagine glycosylation sites follow: Asn-227 and Asn-314. Disulfide bonds link Cys-321-Cys-332, Cys-438-Cys-441, and Cys-448-Cys-466. A coiled-coil region spans residues 481 to 512 (TDQEIKILEDNKELENALKNIQLPKEEIKKLK). Ser-624 (charge relay system) is an active-site residue. The cysteines at positions 643 and 755 are disulfide-linked. N-linked (GlcNAc...) asparagine glycosylation is present at Asn-679. Catalysis depends on charge relay system residues Asp-702 and His-734.

It belongs to the peptidase S9B family. In terms of assembly, homodimer; homodimerization is required for activity of both plasma membrane and soluble forms. The monomer is inactive. Heterodimer with DPP4. Interacts with PLAUR; the interaction occurs at the cell surface of invadopodia membranes. Interacts with ITGB1. Interacts with ITGA3. Associates with integrin alpha-3/beta-1; the association occurs in a collagen-dependent manner at the cell surface of invadopodia membranes. Post-translationally, N-glycosylated. The N-terminus may be blocked.

It is found in the cell surface. It localises to the cell membrane. Its subcellular location is the cell projection. The protein resides in the lamellipodium membrane. The protein localises to the invadopodium membrane. It is found in the ruffle membrane. It localises to the membrane. Its subcellular location is the secreted. It carries out the reaction Release of an N-terminal dipeptide, Xaa-Yaa-|-Zaa-, from a polypeptide, preferentially when Yaa is Pro, provided Zaa is neither Pro nor hydroxyproline.. The catalysed reaction is Hydrolysis of Pro-|-Xaa &gt;&gt; Ala-|-Xaa in oligopeptides.. Gelatinase activity is inhibited by serine-protease inhibitors, such as phenylmethylsulfonyl fluoride (PMSF), 4-(2-aminoethyl)-benzenesulfonyl fluoride hydrochloride (AEBSF), 4-amidino phenylsulfonyl fluoride (APSF) and diisopropyl fluorophosphate (DFP), N-ethylmaleimide (NEM) and phenylmethylsulfonyl fluoride (PMSF). Dipeptidyl peptidase activity is inhibited by 2,2'-azino-bis(3-ethylbenzthiazoline-6-sulfonic acid), diisopropylfluorophosphate (DFP). Prolyl endopeptidase activity is inhibited by the boronic acid peptide Ac-Gly-BoroPro, Ac-Gly-Pro-chloromethyl ketone and Thr-Ser-Gly-chloromethyl ketone. In terms of biological role, cell surface glycoprotein serine protease that participates in extracellular matrix degradation and involved in many cellular processes including tissue remodeling, fibrosis, wound healing, inflammation and tumor growth. Both plasma membrane and soluble forms exhibit post-proline cleaving endopeptidase activity, with a marked preference for Ala/Ser-Gly-Pro-Ser/Asn/Ala consensus sequences, on substrate such as alpha-2-antiplasmin SERPINF2 and SPRY2. Degrade also gelatin, heat-denatured type I collagen, but not native collagen type I and IV, vibronectin, tenascin, laminin, fibronectin, fibrin or casein. Also has dipeptidyl peptidase activity, exhibiting the ability to hydrolyze the prolyl bond two residues from the N-terminus of synthetic dipeptide substrates provided that the penultimate residue is proline, with a preference for Ala-Pro, Ile-Pro, Gly-Pro, Arg-Pro and Pro-Pro. Natural neuropeptide hormones for dipeptidyl peptidase are the neuropeptide Y (NPY), peptide YY (PYY), substance P (TAC1) and brain natriuretic peptide 32 (NPPB). The plasma membrane form, in association with either DPP4, PLAUR or integrins, is involved in the pericellular proteolysis of the extracellular matrix (ECM), and hence promotes cell adhesion, migration and invasion through the ECM. Plays a role in tissue remodeling during development and wound healing. Participates in the cell invasiveness towards the ECM in malignant melanoma cancers. Enhances tumor growth progression by increasing angiogenesis, collagen fiber degradation and apoptosis and by reducing antitumor response of the immune system. Promotes glioma cell invasion through the brain parenchyma by degrading the proteoglycan brevican. Acts as a tumor suppressor in melanocytic cells through regulation of cell proliferation and survival in a serine protease activity-independent manner. This chain is Prolyl endopeptidase FAP, found in Bos taurus (Bovine).